The chain runs to 399 residues: Zinc finger TRAF-type-containing protein 1 (399 aa).

Positions 1-13 (MSGAEEAGGGGPA) are enriched in gly residues. The segment at 1-20 (MSGAEEAGGGGPAAGPAGAV) is disordered. The segment at 106-151 (CTVCLDLPKASVYQCTNGHLMCAGCFIHLLADARLKEEQATCPNCR) adopts an RING-type; degenerate zinc-finger fold. A TRAF-type zinc finger spans residues 152-210 (CEISKSLCCRNLAVEKAVSELPSECGFCLRQFPRSLLERHQKEECQDRVTQCKYKRIGC).

This sequence belongs to the ZFTRAF1 family. In terms of assembly, interacts with LGALS3.

Its subcellular location is the cytoplasm. The protein localises to the perinuclear region. The protein is Zinc finger TRAF-type-containing protein 1 of Rattus norvegicus (Rat).